The following is a 392-amino-acid chain: Formate-dependent phosphoribosylglycinamide formyltransferase (392 aa).

N(1)-(5-phospho-beta-D-ribosyl)glycinamide is bound by residues 22–23 (EL) and E82. ATP-binding positions include R114, K155, 160–165 (SSGKGQ), 195–198 (EGLV), and E203. Residues 119-308 (RLAAETLGVP…EFALHVRAFL (190 aa)) form the ATP-grasp domain. 2 residues coordinate Mg(2+): E267 and E279. Residues D286, K355, and 362–363 (RR) each bind N(1)-(5-phospho-beta-D-ribosyl)glycinamide.

Belongs to the PurK/PurT family. In terms of assembly, homodimer.

It carries out the reaction N(1)-(5-phospho-beta-D-ribosyl)glycinamide + formate + ATP = N(2)-formyl-N(1)-(5-phospho-beta-D-ribosyl)glycinamide + ADP + phosphate + H(+). The protein operates within purine metabolism; IMP biosynthesis via de novo pathway; N(2)-formyl-N(1)-(5-phospho-D-ribosyl)glycinamide from N(1)-(5-phospho-D-ribosyl)glycinamide (formate route): step 1/1. Functionally, involved in the de novo purine biosynthesis. Catalyzes the transfer of formate to 5-phospho-ribosyl-glycinamide (GAR), producing 5-phospho-ribosyl-N-formylglycinamide (FGAR). Formate is provided by PurU via hydrolysis of 10-formyl-tetrahydrofolate. This chain is Formate-dependent phosphoribosylglycinamide formyltransferase, found in Pectobacterium carotovorum subsp. carotovorum (strain PC1).